Consider the following 294-residue polypeptide: Acetylglutamate kinase (294 aa).

Residues 63 to 64 (GG), Arg-85, and Asn-188 each bind substrate.

This sequence belongs to the acetylglutamate kinase family. ArgB subfamily.

The protein localises to the cytoplasm. The catalysed reaction is N-acetyl-L-glutamate + ATP = N-acetyl-L-glutamyl 5-phosphate + ADP. The protein operates within amino-acid biosynthesis; L-arginine biosynthesis; N(2)-acetyl-L-ornithine from L-glutamate: step 2/4. In terms of biological role, catalyzes the ATP-dependent phosphorylation of N-acetyl-L-glutamate. This Methanococcus vannielii (strain ATCC 35089 / DSM 1224 / JCM 13029 / OCM 148 / SB) protein is Acetylglutamate kinase.